A 353-amino-acid chain; its full sequence is Photosystem II D2 protein (353 aa).

An N-acetylthreonine modification is found at Thr-2. Position 2 is a phosphothreonine (Thr-2). The chain crosses the membrane as a helical span at residues 41 to 61; it reads CAYFALGGWFTGTTFVTSWYT. A chlorophyll a-binding site is contributed by His-118. The chain crosses the membrane as a helical span at residues 125–141; it reads GFMLRQFELARSVQLRP. Gln-130 and Asn-143 together coordinate pheophytin a. A helical transmembrane segment spans residues 153 to 166; the sequence is VFVSVFLIYPLGQS. His-198 contributes to the chlorophyll a binding site. A helical transmembrane segment spans residues 208-228; that stretch reads AALLCAIHGATVENTLFEDGD. Positions 215 and 262 each coordinate a plastoquinone. A Fe cation-binding site is contributed by His-215. Residue His-269 coordinates Fe cation. A helical transmembrane segment spans residues 279-295; the sequence is GLWMSALGVVGLALNLR.

Belongs to the reaction center PufL/M/PsbA/D family. As to quaternary structure, PSII is composed of 1 copy each of membrane proteins PsbA, PsbB, PsbC, PsbD, PsbE, PsbF, PsbH, PsbI, PsbJ, PsbK, PsbL, PsbM, PsbT, PsbX, PsbY, PsbZ, Psb30/Ycf12, at least 3 peripheral proteins of the oxygen-evolving complex and a large number of cofactors. It forms dimeric complexes. The cofactor is The D1/D2 heterodimer binds P680, chlorophylls that are the primary electron donor of PSII, and subsequent electron acceptors. It shares a non-heme iron and each subunit binds pheophytin, quinone, additional chlorophylls, carotenoids and lipids. There is also a Cl(-1) ion associated with D1 and D2, which is required for oxygen evolution. The PSII complex binds additional chlorophylls, carotenoids and specific lipids..

The protein localises to the plastid. It localises to the chloroplast thylakoid membrane. It catalyses the reaction 2 a plastoquinone + 4 hnu + 2 H2O = 2 a plastoquinol + O2. Its function is as follows. Photosystem II (PSII) is a light-driven water:plastoquinone oxidoreductase that uses light energy to abstract electrons from H(2)O, generating O(2) and a proton gradient subsequently used for ATP formation. It consists of a core antenna complex that captures photons, and an electron transfer chain that converts photonic excitation into a charge separation. The D1/D2 (PsbA/PsbD) reaction center heterodimer binds P680, the primary electron donor of PSII as well as several subsequent electron acceptors. D2 is needed for assembly of a stable PSII complex. This chain is Photosystem II D2 protein, found in Citrus sinensis (Sweet orange).